The following is a 467-amino-acid chain: DNA methyltransferase 1-associated protein 1 (467 aa).

Composition is skewed to basic and acidic residues over residues 1-11 (MATGADVRDIL) and 26-48 (SKKD…LTFK). A disordered region spans residues 1-48 (MATGADVRDILELGGPEGDAASGTISKKDIINPDKKKSKKSSETLTFK). Lysine 27 participates in a covalent cross-link: Glycyl lysine isopeptide (Lys-Gly) (interchain with G-Cter in SUMO2). Positions 149 to 199 (DDAWTKAETDHLFDLSRRFDLRFVVIHDRYDHQQFKKRSVEDLKERYYHIC) constitute an SANT domain. Residue lysine 214 forms a Glycyl lysine isopeptide (Lys-Gly) (interchain with G-Cter in SUMO2) linkage. Positions 225-275 (RRKEQLERLYNRTPEQVAEEEYLLQELRKIEARKKEREKRSQDLQKLITAA) form a coiled coil. Positions 258–267 (KKEREKRSQD) are enriched in basic and acidic residues. Disordered regions lie at residues 258-305 (KKER…PAVP) and 404-467 (LGGP…AKKP). A compositionally biased stretch (low complexity) spans 406–422 (GPATPASGPGPASAEPA). The residue at position 445 (threonine 445) is a Phosphothreonine. Residue serine 448 is modified to Phosphoserine.

As to quaternary structure, component of the NuA4 histone acetyltransferase complex which contains the catalytic subunit KAT5/TIP60 and the subunits EP400, TRRAP/PAF400, BRD8/SMAP, EPC1, DMAP1/DNMAP1, RUVBL1/TIP49, RUVBL2, ING3, actin, ACTL6A/BAF53A, MORF4L1/MRG15, MORF4L2/MRGX, MRGBP, YEATS4/GAS41, VPS72/YL1 and MEAF6. Component of a NuA4-related complex which contains EP400, TRRAP/PAF400, SRCAP, BRD8/SMAP, EPC1, DMAP1/DNMAP1, RUVBL1/TIP49, RUVBL2, actin, ACTL6A/BAF53A, VPS72 and YEATS4/GAS41. DMAP1 also forms a complex with DNMT1 and HDAC2. Throughout S phase it interacts directly with the N-terminus of DNMT1, which serves to recruit DMAP1 to replication foci. DMAP1 interacts with ING1, a component of the mSin3A transcription repressor complex, although this interaction is not required for recruitment of ING1 to heterochromatin. Interacts directly with the transcriptional corepressor TSG101. Interacts with the pro-apoptotic protein DAXX. Interacts with URI1.

It is found in the nucleus. The protein localises to the cytoplasm. Involved in transcription repression and activation. Its interaction with HDAC2 may provide a mechanism for histone deacetylation in heterochromatin following replication of DNA at late firing origins. Can also repress transcription independently of histone deacetylase activity. May specifically potentiate DAXX-mediated repression of glucocorticoid receptor-dependent transcription. Component of the NuA4 histone acetyltransferase (HAT) complex which is involved in transcriptional activation of select genes principally by acetylation of nucleosomal histones H4 and H2A. This modification may both alter nucleosome - DNA interactions and promote interaction of the modified histones with other proteins which positively regulate transcription. This complex may be required for the activation of transcriptional programs associated with oncogene and proto-oncogene mediated growth induction, tumor suppressor mediated growth arrest and replicative senescence, apoptosis, and DNA repair. NuA4 may also play a direct role in DNA repair when recruited to sites of DNA damage. Participates in the nuclear localization of URI1 and increases its transcriptional corepressor activity. The protein is DNA methyltransferase 1-associated protein 1 (DMAP1) of Homo sapiens (Human).